The sequence spans 240 residues: uncharacterized protein (240 aa).

It is found in the mitochondrion. This is an uncharacterized protein from Arabidopsis thaliana (Mouse-ear cress).